The sequence spans 227 residues: Charged multivesicular body protein 4b (227 aa).

2 disordered regions span residues 1 to 26 and 186 to 227; these read MSGI…SPQE and SGPE…AGNM. Residues 9–20 show a composition bias toward gly residues; it reads FGAGAGGKGAGK. The stretch at 25–185 forms a coiled coil; sequence QEAIQRLRDT…EELDKNLLEI (161 aa).

This sequence belongs to the SNF7 family. As to quaternary structure, probable core component of the endosomal sorting required for transport complex III (ESCRT-III). ESCRT-III components are thought to multimerize to form a flat lattice on the perimeter membrane of the endosome.

Its subcellular location is the cytoplasm. It is found in the cytosol. The protein resides in the late endosome membrane. The protein localises to the midbody. Functionally, probable core component of the endosomal sorting required for transport complex III (ESCRT-III) which is involved in multivesicular bodies (MVBs) formation and sorting of endosomal cargo proteins into MVBs. MVBs contain intraluminal vesicles (ILVs) that are generated by invagination and scission from the limiting membrane of the endosome and mostly are delivered to lysosomes enabling degradation of membrane proteins, such as stimulated growth factor receptors, lysosomal enzymes and lipids. In Gallus gallus (Chicken), this protein is Charged multivesicular body protein 4b (CHMP4B).